We begin with the raw amino-acid sequence, 365 residues long: tRNA-specific 2-thiouridylase MnmA (365 aa).

Residues 12–19 (AMSGGVDS) and Met-38 each bind ATP. The Nucleophile role is filled by Cys-108. Cys-108 and Cys-206 are oxidised to a cystine. Gly-132 contributes to the ATP binding site. An interaction with tRNA region spans residues 156–158 (KDQ). Catalysis depends on Cys-206, which acts as the Cysteine persulfide intermediate. Positions 312 to 313 (RY) are interaction with tRNA.

Belongs to the MnmA/TRMU family.

Its subcellular location is the cytoplasm. The catalysed reaction is S-sulfanyl-L-cysteinyl-[protein] + uridine(34) in tRNA + AH2 + ATP = 2-thiouridine(34) in tRNA + L-cysteinyl-[protein] + A + AMP + diphosphate + H(+). In terms of biological role, catalyzes the 2-thiolation of uridine at the wobble position (U34) of tRNA, leading to the formation of s(2)U34. This is tRNA-specific 2-thiouridylase MnmA from Carboxydothermus hydrogenoformans (strain ATCC BAA-161 / DSM 6008 / Z-2901).